Consider the following 257-residue polypeptide: Isoprenyl transferase (257 aa).

Residue D34 is part of the active site. Residue D34 participates in Mg(2+) binding. Residues 35–38 (GNGR), W39, R47, H51, and 79–81 (STE) contribute to the substrate site. The active-site Proton acceptor is the N82. Substrate contacts are provided by residues W83, R85, R202, and 208 to 210 (RLS). E221 is a binding site for Mg(2+).

This sequence belongs to the UPP synthase family. As to quaternary structure, homodimer. Requires Mg(2+) as cofactor.

Functionally, catalyzes the condensation of isopentenyl diphosphate (IPP) with allylic pyrophosphates generating different type of terpenoids. The polypeptide is Isoprenyl transferase (Geobacillus kaustophilus (strain HTA426)).